Here is a 591-residue protein sequence, read N- to C-terminus: MKKISLPKIGIRPVIDGRRMGVRESLEEQTMNMAKATAALITEKLRHACGAQIECVIADTCIAGMAESAACEEKFSSQNVGVTITVTPCWCYGSETIDMDPMRPKAIWGFNGTERPGAVYLAAALAAHSQKGIPAFSIYGHDVQDADDTSIPADVEEKLLRFARAGLAVASMKGKSYLSVGGVSMGIAGSIVDHNFFESWLGMKVQAVDMTELRRRIDQKIYDEAELEMALAWADKNFRYGEDQNAQQYKRNEEQSRAVLKESLLMAMCIRDMMQGNNKLAEKGLVEESLGYNAIAAGFQGQRHWTDQYPNGDTAEALLNSSFDWNGVREPFVVATENDSLNGVAMLLGHQLTGTAQVFADVRTYWSPEAVERVTGQPLTGLAEHGIIHLINSGSAALDGSCKQRDSEGKPTMKPHWEISQQEADACLAATEWCPAIHEYFRGGGYSSRFLTEGGVPFTMTRVNIIKGLGPVLQIAEGWSVELPKEMHDQLDARTNSTWPTTWFAPRLTGKGPFTDVYSVMANWGANHGVLTIGHVGADFITLAAMLRIPVCMHNVDDAKIYRPSAWAAHGMDIEGQDYRACQNYGPLYKR.

Active-site proton acceptor residues include glutamate 337 and aspartate 361. Mn(2+) is bound by residues glutamate 337, aspartate 361, and histidine 528.

This sequence belongs to the L-fucose isomerase family. As to quaternary structure, homohexamer. Mn(2+) is required as a cofactor.

The protein localises to the cytoplasm. The catalysed reaction is L-fucose = L-fuculose. The protein operates within carbohydrate degradation; L-fucose degradation; L-lactaldehyde and glycerone phosphate from L-fucose: step 1/3. Functionally, converts the aldose L-fucose into the corresponding ketose L-fuculose. This Citrobacter koseri (strain ATCC BAA-895 / CDC 4225-83 / SGSC4696) protein is L-fucose isomerase.